Reading from the N-terminus, the 113-residue chain is Large ribosomal subunit protein P1 (113 aa).

Positions 84–113 (APAAAAKKETKKEEVKKEESDDDMGMGLFD) are disordered. Residues 89–102 (AKKETKKEEVKKEE) show a composition bias toward basic and acidic residues.

The protein belongs to the eukaryotic ribosomal protein P1/P2 family. In terms of assembly, P1 and P2 exist as dimers at the large ribosomal subunit.

Plays an important role in the elongation step of protein synthesis. This is Large ribosomal subunit protein P1 (rplp1) from Dictyostelium discoideum (Social amoeba).